The primary structure comprises 192 residues: ADP-ribose glycohydrolase AF_1521 (192 aa).

The Macro domain occupies 1–192 (MEVLFEAKVG…VALKVFERSL (192 aa)). Substrate is bound by residues 19–21 (GDI), 32–34 (AAN), 39–44 (HGGGVA), and 140–146 (VSAGIYG).

It catalyses the reaction 5-O-(ADP-D-ribosyl)-L-glutamyl-[protein] + H2O = L-glutamyl-[protein] + ADP-D-ribose + H(+). The catalysed reaction is 4-O-(ADP-D-ribosyl)-L-aspartyl-[protein] + H2O = L-aspartyl-[protein] + ADP-D-ribose + H(+). It carries out the reaction alpha-NAD(+) + H2O = ADP-D-ribose + nicotinamide + H(+). Removes ADP-ribose from aspartate and glutamate residues in proteins bearing a single ADP-ribose moiety. Inactive towards proteins bearing poly-ADP-ribose. Catalyzes removal of a phosphate group from ADP-ribose 1''-phosphate (Appr1p), but with low efficiency. The chain is ADP-ribose glycohydrolase AF_1521 from Archaeoglobus fulgidus (strain ATCC 49558 / DSM 4304 / JCM 9628 / NBRC 100126 / VC-16).